A 121-amino-acid chain; its full sequence is MARKRIAFIFTQGPHGSSAGREGLDALLATSALSEDIGVFFISDGVLQLLPQQQPEKILARNYIATFGVLPLYDVENCYLCERSLQQRGLSKMADWILDVTVLSPADLRRELGTYDVVLTF.

This sequence belongs to the DsrF/TusC family. Heterohexamer, formed by a dimer of trimers. The hexameric TusBCD complex contains 2 copies each of TusB, TusC and TusD. The TusBCD complex interacts with TusE.

It is found in the cytoplasm. Functionally, part of a sulfur-relay system required for 2-thiolation of 5-methylaminomethyl-2-thiouridine (mnm(5)s(2)U) at tRNA wobble positions. The protein is Protein TusC of Yersinia pestis bv. Antiqua (strain Antiqua).